We begin with the raw amino-acid sequence, 59 residues long: Large ribosomal subunit protein bL33 (59 aa).

Belongs to the bacterial ribosomal protein bL33 family.

The chain is Large ribosomal subunit protein bL33 from Prosthecochloris aestuarii (strain DSM 271 / SK 413).